Here is a 1025-residue protein sequence, read N- to C-terminus: Fanconi-associated nuclease 1 (1025 aa).

Residues 40 to 68 (KLACPICSKMVPRYDLNWHLDEKCANNDN) form a UBZ4-type zinc finger. Zn(2+) is bound by residues cysteine 43, cysteine 46, histidine 58, and cysteine 63. The disordered stretch occupies residues 98–120 (TPGKLSPSKASLTPDPSDSAKMG). Phosphoserine is present on serine 182. Positions 682-704 (VEILQRLHMYEEAVKELESLLSQ) form a coiled coil. Glutamate 842, aspartate 968, glutamate 983, and valine 984 together coordinate Mn(2+). In terms of domain architecture, VRR-NUC spans 903–1015 (AESLRAWVAA…GADVEVCHVV (113 aa)).

The protein belongs to the FAN1 family. As to quaternary structure, interacts with FANCD2 (when monoubiquitinated). Interacts with FANCI, MLH1, MLH3 and PMS2. Mn(2+) is required as a cofactor. The cofactor is Mg(2+). Post-translationally, ubiquitinated and degraded during mitotic exit by the APC/C-Cdh1 complex.

It is found in the nucleus. It catalyses the reaction Hydrolytically removes 5'-nucleotides successively from the 3'-hydroxy termini of 3'-hydroxy-terminated oligonucleotides.. Functionally, nuclease required for the repair of DNA interstrand cross-links (ICL) recruited at sites of DNA damage by monoubiquitinated FANCD2. Specifically involved in repair of ICL-induced DNA breaks by being required for efficient homologous recombination, probably in the resolution of homologous recombination intermediates. Not involved in DNA double-strand breaks resection. Acts as a 5'-3' exonuclease that anchors at a cut end of DNA and cleaves DNA successively at every third nucleotide, allowing to excise an ICL from one strand through flanking incisions. Probably keeps excising with 3'-flap annealing until it reaches and unhooks the ICL. Acts at sites that have a 5'-terminal phosphate anchor at a nick or a 1- or 2-nucleotide flap and is augmented by a 3' flap. Also has endonuclease activity toward 5'-flaps. In Ailuropoda melanoleuca (Giant panda), this protein is Fanconi-associated nuclease 1 (FAN1).